The sequence spans 899 residues: Translation initiation factor IF-2 (899 aa).

Disordered stretches follow at residues 65 to 84 (KTRS…SVQI) and 91 to 310 (TYVK…SFNK). Over residues 68 to 82 (STLNVPSTGGKSKSV) the composition is skewed to polar residues. The span at 108 to 164 (QARREAEEQAQRAAEEQAKREAELREAAEKAKRAADEQAKREAAEKAKRDVAEKEKV) shows a compositional bias: basic and acidic residues. Residues 165 to 174 (TNQQNENMTK) are compositionally biased toward polar residues. Over residues 177–236 (QAEKAKREAEAAELKRKAEEAARLKVEEEARRIAEEARRMAEENAGRWEAESAKPEESAD) the composition is skewed to basic and acidic residues. Positions 262 to 276 (SRSRAGKVTKQKKGN) are enriched in basic residues. Residues 277 to 290 (RQSESKADREEARA) show a composition bias toward basic and acidic residues. Positions 398–567 (ARAPVVTIMG…LLQAEVLELK (170 aa)) constitute a tr-type G domain. A G1 region spans residues 407 to 414 (GHVDHGKT). Residue 407 to 414 (GHVDHGKT) coordinates GTP. The tract at residues 432–436 (GITQH) is G2. Positions 453 to 456 (DTPG) are G3. GTP-binding positions include 453–457 (DTPGH) and 507–510 (NKID). Residues 507 to 510 (NKID) form a G4 region. A G5 region spans residues 543-545 (SAK).

The protein belongs to the TRAFAC class translation factor GTPase superfamily. Classic translation factor GTPase family. IF-2 subfamily.

The protein localises to the cytoplasm. Functionally, one of the essential components for the initiation of protein synthesis. Protects formylmethionyl-tRNA from spontaneous hydrolysis and promotes its binding to the 30S ribosomal subunits. Also involved in the hydrolysis of GTP during the formation of the 70S ribosomal complex. The sequence is that of Translation initiation factor IF-2 from Pectobacterium carotovorum subsp. carotovorum (strain PC1).